The following is a 519-amino-acid chain: Na(+)/H(+) exchange regulatory cofactor NHE-RF3 (519 aa).

Residues 9–90 (ECKLSKQEGQ…SVTLLVLDGD (82 aa)) enclose the PDZ 1 domain. Phosphoserine is present on residues Ser108, Ser148, Ser192, Ser250, Ser334, and Ser348. 2 PDZ domains span residues 134–215 (RLCY…VDKE) and 243–323 (IVEM…VDKE). The interval 347–374 (GSVKEAPAPTPTSLEVSSPPDTTEEVDH) is disordered. Positions 357-367 (PTSLEVSSPPD) are enriched in polar residues. Residues 378-458 (LCRLAKGENG…NVTLLVCGKK (81 aa)) form the PDZ 4 domain. Thr451 is modified (phosphothreonine). The disordered stretch occupies residues 479–519 (DTPPDSKEGIVVESNHDSHMAKERAHSTASHSSSNSEDTEM). Basic and acidic residues predominate over residues 482-504 (PDSKEGIVVESNHDSHMAKERAH). 6 positions are modified to phosphoserine: Ser492, Ser508, Ser510, Ser511, Ser512, and Ser514. Low complexity predominate over residues 505–519 (STASHSSSNSEDTEM).

The protein belongs to the NHER family. As to quaternary structure, interacts with PDZK1IP1 and ABCC2. Interacts (via PDZ domains 1 and 3) with SCARB1 (C-terminal domain). Forms a heterodimeric complex with NHERF1. Interacts with AKAP2, BCR, CFTR, SLC22A12, SLC22A4, SLC22A5, NHERF2 and SLC17A1. Component of a complex, composed of PDZK1, SYNGAP1, KLHL17 and NMDA receptors. Interacts (via PDZ1 domain) directly with KLHL17; the interaction is important for integrity of actin cytoskeleton structures in neurons. Interacts (via the first PDZ domain) with PTGIR (via non-isoprenylated C-terminus). Interacts (via C-terminal PDZ domain) with SLC26A6 (via C-terminal domain). Interacts (via C-terminal PDZ domain) with SLC9A3 (via C-terminal domain). Interacts (via PDZ domains 1 and 3) with SLC5A8 (via PDZ-binding motif); interaction increases nicotinate transport activity of SLC5A8. In terms of tissue distribution, expression is limited to epithelial cells. Expressed in the kidney (brush border of proximal tubule), pancreas, liver, and small intestine. Expressed at a lower level in the adrenal cortex, testis and stomach. Overexpressed in breast, renal and lung carcinomas.

The protein resides in the membrane. The protein localises to the cell membrane. Functionally, a scaffold protein that connects plasma membrane proteins and regulatory components, regulating their surface expression in epithelial cells apical domains. May be involved in the coordination of a diverse range of regulatory processes for ion transport and second messenger cascades. In complex with NHERF1, may cluster proteins that are functionally dependent in a mutual fashion and modulate the trafficking and the activity of the associated membrane proteins. May play a role in the cellular mechanisms associated with multidrug resistance through its interaction with ABCC2 and PDZK1IP1. May potentiate the CFTR chloride channel activity. Required for normal cell-surface expression of SCARB1. Plays a role in maintaining normal plasma cholesterol levels via its effects on SCARB1. Plays a role in the normal localization and function of the chloride-anion exchanger SLC26A6 to the plasma membrane in the brush border of the proximal tubule of the kidney. May be involved in the regulation of proximal tubular Na(+)-dependent inorganic phosphate cotransport therefore playing an important role in tubule function. This chain is Na(+)/H(+) exchange regulatory cofactor NHE-RF3 (PDZK1), found in Homo sapiens (Human).